A 246-amino-acid polypeptide reads, in one-letter code: Trypsin V-B (246 aa).

An N-terminal signal peptide occupies residues 1 to 15 (MKICIFFTLLGTVAA). A propeptide spans 16-24 (FPTEDNDDR) (activation peptide). The region spanning 25 to 244 (IVGGYTCQEH…YLNWIQQTVA (220 aa)) is the Peptidase S1 domain. 6 cysteine pairs are disulfide-bonded: Cys-31-Cys-160, Cys-49-Cys-65, Cys-133-Cys-233, Cys-140-Cys-206, Cys-171-Cys-185, and Cys-196-Cys-220. His-64 serves as the catalytic Charge relay system. Ca(2+)-binding residues include Glu-76, Asn-78, and Glu-86. The active-site Charge relay system is the Asp-108. Residue Ser-200 is the Charge relay system of the active site.

The protein belongs to the peptidase S1 family. It depends on Ca(2+) as a cofactor.

It is found in the secreted. Its subcellular location is the extracellular space. It carries out the reaction Preferential cleavage: Arg-|-Xaa, Lys-|-Xaa.. This Rattus norvegicus (Rat) protein is Trypsin V-B.